The following is a 154-amino-acid chain: MQVIEGGINAAGKKFAIIVSRFNHFMVESLLDGAVQTLKHYGEVADDDITVVRVPGAYEMPVTAKRLASSGKYDAIIAVGAVIRGGTPHFEFVAGECNSGLGRVATEFDLPVAFGVITTDTLEQAIERSGSKAGNKGSEAALSALEMVNVLKQL.

5-amino-6-(D-ribitylamino)uracil-binding positions include F22, 57–59 (AYE), and 81–83 (AVI). A (2S)-2-hydroxy-3-oxobutyl phosphate-binding site is contributed by 86–87 (GT). Catalysis depends on H89, which acts as the Proton donor. Residue F114 coordinates 5-amino-6-(D-ribitylamino)uracil. Residue R128 coordinates (2S)-2-hydroxy-3-oxobutyl phosphate.

It belongs to the DMRL synthase family. In terms of assembly, forms an icosahedral capsid composed of 60 subunits, arranged as a dodecamer of pentamers.

The enzyme catalyses (2S)-2-hydroxy-3-oxobutyl phosphate + 5-amino-6-(D-ribitylamino)uracil = 6,7-dimethyl-8-(1-D-ribityl)lumazine + phosphate + 2 H2O + H(+). The protein operates within cofactor biosynthesis; riboflavin biosynthesis; riboflavin from 2-hydroxy-3-oxobutyl phosphate and 5-amino-6-(D-ribitylamino)uracil: step 1/2. Its function is as follows. Catalyzes the formation of 6,7-dimethyl-8-ribityllumazine by condensation of 5-amino-6-(D-ribitylamino)uracil with 3,4-dihydroxy-2-butanone 4-phosphate. This is the penultimate step in the biosynthesis of riboflavin. The chain is 6,7-dimethyl-8-ribityllumazine synthase from Idiomarina loihiensis (strain ATCC BAA-735 / DSM 15497 / L2-TR).